A 797-amino-acid chain; its full sequence is MAP/microtubule affinity-regulating kinase 3 (797 aa).

The segment at 1–35 (MSTRTPLPTVNERDTENHISHGDGRQEVTSRTGRS) is disordered. The segment covering 11 to 28 (NERDTENHISHGDGRQEV) has biased composition (basic and acidic residues). Residue S42 is modified to Phosphoserine. One can recognise a Protein kinase domain in the interval 56–307 (YRLLKTIGKG…LEQIMKDRWI (252 aa)). Residues 62–70 (IGKGNFAKV) and K85 contribute to the ATP site. Catalysis depends on D178, which acts as the Proton acceptor. A Phosphothreonine; by LKB1 modification is found at T211. One can recognise a UBA domain in the interval 326 to 365 (ISDQKRIDIMVGMGYSQEEIQESLSKMKYDEITATYLLLG). Residues S368, S374, S376, S380, S383, S400, S419, and S469 each carry the phosphoserine modification. Disordered stretches follow at residues 372-504 (DASD…GMTR) and 585-701 (PDQR…KPRS). Over residues 374 to 385 (SDSSSSSNLSLA) the composition is skewed to low complexity. A compositionally biased stretch (polar residues) spans 391–400 (SDLSNSTGQS). 2 stretches are compositionally biased toward polar residues: residues 492 to 504 (VPSS…GMTR) and 585 to 602 (PDQR…SATT). 2 positions are modified to phosphoserine: S593 and S596. Position 602 is a phosphothreonine (T602). T617 is modified (phosphothreonine; by PKC/PRKCZ). A phosphoserine mark is found at S636, S651, and S654. Positions 637-664 (PSLSHEATPLSQTRSRGSTNLFSKLTSK) are enriched in polar residues. The segment covering 669–678 (LPTEYERNGR) has biased composition (basic and acidic residues). Phosphoserine is present on S687. The span at 689–699 (EQKDENREAKP) shows a compositional bias: basic and acidic residues. The KA1 domain occupies 748-797 (DGHAESLVQWEMEVCKLPRLSLNGVRFKRISGTSIAFKNIASKIANELKL).

Belongs to the protein kinase superfamily. CAMK Ser/Thr protein kinase family. SNF1 subfamily. In terms of assembly, interacts with MAPT/TAU. Interacts with DLG5 (via coiled-coil domain). Interacts with STK3/MST2 and STK4/MST1 in the presence of DLG5. Interacts with YWHAB, YWHAG, YWHAQ and YWHAZ. Interacts with PKP2 (via N-terminus). Interacts with CDC25C. Interacts with KSR1. In terms of processing, phosphorylated at Thr-211 by STK11/LKB1 in complex with STE20-related adapter-alpha (STRADA) pseudo kinase and CAB39. Phosphorylation at Thr-617 by PRKCZ/aPKC inhibits the kinase activity.

It localises to the cell membrane. The protein resides in the cell projection. The protein localises to the dendrite. It is found in the cytoplasm. It catalyses the reaction L-seryl-[protein] + ATP = O-phospho-L-seryl-[protein] + ADP + H(+). The catalysed reaction is L-threonyl-[protein] + ATP = O-phospho-L-threonyl-[protein] + ADP + H(+). Its activity is regulated as follows. Activated by phosphorylation on Thr-211. Inhibited by phosphorylation on Thr-617. In terms of biological role, serine/threonine-protein kinase. Involved in the specific phosphorylation of microtubule-associated proteins for MAP2 and MAP4. Phosphorylates the microtubule-associated protein MAPT/TAU. Phosphorylates CDC25C on 'Ser-216'. Regulates localization and activity of some histone deacetylases by mediating phosphorylation of HDAC7, promoting subsequent interaction between HDAC7 and 14-3-3 and export from the nucleus. Regulates localization and activity of MITF by mediating its phosphorylation, promoting subsequent interaction between MITF and 14-3-3 and retention in the cytosol. Negatively regulates the Hippo signaling pathway and antagonizes the phosphorylation of LATS1. Cooperates with DLG5 to inhibit the kinase activity of STK3/MST2 toward LATS1. Phosphorylates PKP2 and KSR1. This Rattus norvegicus (Rat) protein is MAP/microtubule affinity-regulating kinase 3 (Mark3).